Here is a 223-residue protein sequence, read N- to C-terminus: Proteinase inhibitor type-2 TR8 (223 aa).

Residues 1–24 form the signal peptide; the sequence is MAIYKVALLLLFGMILLASDFEHA. A run of 3 repeats spans residues 24–81, 88–145, and 152–209. 8 disulfides stabilise this stretch: Cys27-Cys120, Cys31-Cys116, Cys40-Cys126, Cys52-Cys95, Cys55-Cys73, Cys56-Cys91, Cys62-Cys104, and Cys119-Cys137.

The protein belongs to the protease inhibitor I20 (potato type II proteinase inhibitor) family.

In Solanum lycopersicum (Tomato), this protein is Proteinase inhibitor type-2 TR8 (ARPI).